The chain runs to 288 residues: Heme oxygenase 1 (288 aa).

The Cytoplasmic portion of the chain corresponds to 1–265 (MERPQPDSMP…KTPLNTHSQA (265 aa)). K18, H25, Y134, and R183 together coordinate heme b. Residues 223 to 260 (HDTKDQSPSRAPGLRQRASNKAQDSAPVETPRGKTPLN) are disordered. At S229 the chain carries Phosphoserine. A helical; Anchor for type IV membrane protein membrane pass occupies residues 266 to 288 (PLLRWVLTLSFLVATVAVGLYAM).

This sequence belongs to the heme oxygenase family. In terms of assembly, homodimer and higher order homooligomer. Oligomerization is crucial for its stability and function in the endoplasmic reticulum. Interacts with FLVCR2; this interaction is potentiated in the presence of heme. Post-translationally, a soluble form arises by proteolytic removal of the membrane anchor.

Its subcellular location is the endoplasmic reticulum membrane. The catalysed reaction is heme b + 3 reduced [NADPH--hemoprotein reductase] + 3 O2 = biliverdin IXalpha + CO + Fe(2+) + 3 oxidized [NADPH--hemoprotein reductase] + 3 H2O + H(+). Catalyzes the oxidative cleavage of heme at the alpha-methene bridge carbon, released as carbon monoxide (CO), to generate biliverdin IXalpha, while releasing the central heme iron chelate as ferrous iron. Affords protection against programmed cell death and this cytoprotective effect relies on its ability to catabolize free heme and prevent it from sensitizing cells to undergo apoptosis. Its function is as follows. Catalyzes the oxidative cleavage of heme at the alpha-methene bridge carbon, released as carbon monoxide (CO), to generate biliverdin IXalpha, while releasing the central heme iron chelate as ferrous iron. In Pongo abelii (Sumatran orangutan), this protein is Heme oxygenase 1 (HMOX1).